We begin with the raw amino-acid sequence, 816 residues long: Probable E3 ubiquitin-protein ligase hulA (816 aa).

The 112-residue stretch at 1 to 112 (MGSNLPAQPN…QMGGDEMLTR (112 aa)) folds into the C2 domain. Disordered stretches follow at residues 134-238 (NLST…GWER) and 254-354 (RTTT…YFVD). The span at 160–178 (VPQVAPSSSHPAASGAAPV) shows a compositional bias: low complexity. The span at 181–192 (SASNPSLNPQRV) shows a compositional bias: polar residues. Residues 193–213 (PSTTRPSSTAAPASAAGAAAS) show a composition bias toward low complexity. Composition is skewed to polar residues over residues 214–227 (NTHG…SFED) and 254–267 (RTTT…NYNE). The region spanning 230-263 (GRLPAGWERREDNLGRTYYVDHNTRTTTWTRPSS) is the WW 1 domain. Basic and acidic residues predominate over residues 268–295 (HAQRSQREANMQLERRAHQSRMLPEDRT). Positions 296–310 (GANSPNLPESSQQAH) are enriched in polar residues. Over residues 325 to 334 (ATGATTAGTG) the composition is skewed to low complexity. WW domains are found at residues 334–367 (GELP…DPRR) and 394–427 (GPLP…DPRL). Positions 483–816 (SASDLKKRLM…VEETLGFGQE (334 aa)) constitute an HECT domain. Cysteine 784 acts as the Glycyl thioester intermediate in catalysis.

This sequence belongs to the RSP5/NEDD4 family. In terms of assembly, interacts with creD.

It is found in the cytoplasm. The catalysed reaction is S-ubiquitinyl-[E2 ubiquitin-conjugating enzyme]-L-cysteine + [acceptor protein]-L-lysine = [E2 ubiquitin-conjugating enzyme]-L-cysteine + N(6)-ubiquitinyl-[acceptor protein]-L-lysine.. It participates in protein modification; protein ubiquitination. Its function is as follows. E3 ubiquitin-protein ligase which accepts ubiquitin from an E2 ubiquitin-conjugating enzyme in the form of a thioester and then directly transfers the ubiquitin to targeted substrates. Probably involved in the regulatory network controlling carbon source utilization. The protein is Probable E3 ubiquitin-protein ligase hulA (hulA) of Neosartorya fischeri (strain ATCC 1020 / DSM 3700 / CBS 544.65 / FGSC A1164 / JCM 1740 / NRRL 181 / WB 181) (Aspergillus fischerianus).